Consider the following 597-residue polypeptide: FERM domain-containing protein 3 (597 aa).

The FERM domain maps to 32-312 (MRCTIRLLDD…ENQAFYKYAK (281 aa)). Residues 409–435 (SAPLISSSPVKAAQEYEDPPSEEEDKI) are disordered. Residues 423–432 (EYEDPPSEEE) are compositionally biased toward acidic residues. A helical transmembrane segment spans residues 531-551 (LLVVGLGLLLFVFPLLLLLLE).

It is found in the membrane. Its function is as follows. Putative tumor suppressor gene that may be implicated in the origin and progression of lung cancer. In Pongo abelii (Sumatran orangutan), this protein is FERM domain-containing protein 3 (FRMD3).